A 443-amino-acid polypeptide reads, in one-letter code: Probable glycine dehydrogenase (decarboxylating) subunit 1 (443 aa).

The protein belongs to the GcvP family. N-terminal subunit subfamily. As to quaternary structure, the glycine cleavage system is composed of four proteins: P, T, L and H. In this organism, the P 'protein' is a heterodimer of two subunits.

The enzyme catalyses N(6)-[(R)-lipoyl]-L-lysyl-[glycine-cleavage complex H protein] + glycine + H(+) = N(6)-[(R)-S(8)-aminomethyldihydrolipoyl]-L-lysyl-[glycine-cleavage complex H protein] + CO2. Functionally, the glycine cleavage system catalyzes the degradation of glycine. The P protein binds the alpha-amino group of glycine through its pyridoxal phosphate cofactor; CO(2) is released and the remaining methylamine moiety is then transferred to the lipoamide cofactor of the H protein. The protein is Probable glycine dehydrogenase (decarboxylating) subunit 1 of Nitratidesulfovibrio vulgaris (strain DP4) (Desulfovibrio vulgaris).